Reading from the N-terminus, the 215-residue chain is E3 ubiquitin-protein ligase NleG (215 aa).

The tract at residues 136–189 is RING/U-box domain; sequence CPITLCIPETGVFVRNAKNSEICSLYDHNALTELIRRNAPHPLSREPFVPEMIV. Positions 213 to 215 match the PDZ-binding motif motif; the sequence is TRI.

Belongs to the NleG E3 ligase family. As to quaternary structure, interacts with host GOPC (human protein). In terms of processing, two sizes of protein are detected upon expression in C.rodentium; only the smaller protein is secreted.

The protein resides in the secreted. Its subcellular location is the host cytoplasm. The enzyme catalyses S-ubiquitinyl-[E2 ubiquitin-conjugating enzyme]-L-cysteine + [acceptor protein]-L-lysine = [E2 ubiquitin-conjugating enzyme]-L-cysteine + N(6)-ubiquitinyl-[acceptor protein]-L-lysine.. In terms of biological role, effector proteins function to alter host cell physiology and promote bacterial survival in host tissues. This protein is an E3 ubiquitin-protein ligase that probably interferes with the host's ubiquitination pathway and targets host proteins for proteasomal degradation. Can ubiquitinate ubiquitin, giving rise to polyubiquitin chains (in vitro). Does not complement an nleG8 deletion in C.rodentium. This Escherichia coli O157:H7 protein is E3 ubiquitin-protein ligase NleG.